The primary structure comprises 192 residues: Flavin prenyltransferase UbiX (192 aa).

FMN-binding positions include 10–12 (GAS), Ser-36, 92–95 (SMTT), and Arg-127. Dimethylallyl phosphate contacts are provided by Tyr-157 and Lys-173.

It belongs to the UbiX/PAD1 family.

It carries out the reaction dimethylallyl phosphate + FMNH2 = prenylated FMNH2 + phosphate. Its function is as follows. Flavin prenyltransferase that catalyzes the synthesis of the prenylated FMN cofactor (prenyl-FMN) for 4-hydroxy-3-polyprenylbenzoic acid decarboxylase UbiD. The prenyltransferase is metal-independent and links a dimethylallyl moiety from dimethylallyl monophosphate (DMAP) to the flavin N5 and C6 atoms of FMN. The chain is Flavin prenyltransferase UbiX from Chlamydia pneumoniae (Chlamydophila pneumoniae).